We begin with the raw amino-acid sequence, 404 residues long: MMTYEYILVRYGEMTTKGKNRSKFVSTLKDNVKFKLKKFPNIKIDATHDRMYIQLNGEDHEAISERLKDVFGIHKFNLAMKVPSELEDIKKGALAAFLQVKDDVKTFKITVHRSDKRFPMKTMELLPEIGGHILENTEDITVDVHNPDVNVRIEIRSGYSYIMCGEHMGAGGLPVGVGGKVMVLLSGGIDSPVAAYLTMKRGVSVEAVHFHSPPFTSERAKQKVIDLAQGLTKYCKRVTLHLVPFTEVQKTINKEIPSSYSMTVMRRMMMRITEQIAEERNALAITTGESLGQVASQTLDSMHTINEVTNYPVIRPLITMDKLEIIKIAEEIGTYDISIRPYEDCCTVFTPASPATKPKREKANRFEAKYDFTPLIEEAVANKETMVLQTVEVVAEEEKFEELF.

Residues 61-166 form the THUMP domain; sequence EAISERLKDV…SGYSYIMCGE (106 aa). Residues 184-185, 209-210, R266, G288, and Q297 contribute to the ATP site; these read LL and HF.

Belongs to the ThiI family.

It localises to the cytoplasm. It catalyses the reaction [ThiI sulfur-carrier protein]-S-sulfanyl-L-cysteine + a uridine in tRNA + 2 reduced [2Fe-2S]-[ferredoxin] + ATP + H(+) = [ThiI sulfur-carrier protein]-L-cysteine + a 4-thiouridine in tRNA + 2 oxidized [2Fe-2S]-[ferredoxin] + AMP + diphosphate. The enzyme catalyses [ThiS sulfur-carrier protein]-C-terminal Gly-Gly-AMP + S-sulfanyl-L-cysteinyl-[cysteine desulfurase] + AH2 = [ThiS sulfur-carrier protein]-C-terminal-Gly-aminoethanethioate + L-cysteinyl-[cysteine desulfurase] + A + AMP + 2 H(+). It participates in cofactor biosynthesis; thiamine diphosphate biosynthesis. In terms of biological role, catalyzes the ATP-dependent transfer of a sulfur to tRNA to produce 4-thiouridine in position 8 of tRNAs, which functions as a near-UV photosensor. Also catalyzes the transfer of sulfur to the sulfur carrier protein ThiS, forming ThiS-thiocarboxylate. This is a step in the synthesis of thiazole, in the thiamine biosynthesis pathway. The sulfur is donated as persulfide by IscS. This is Probable tRNA sulfurtransferase from Bacillus cereus (strain G9842).